Here is a 165-residue protein sequence, read N- to C-terminus: Cytochrome c-type biogenesis protein CcmE (165 aa).

The Cytoplasmic segment spans residues 1 to 29; the sequence is MSATAEDNARGAKPAGNFARTVSQRKRKR. A helical; Signal-anchor for type II membrane protein membrane pass occupies residues 30–50; that stretch reads LFLIGGALAVLAVAVGLMLMA. Over 51–165 the chain is Periplasmic; sequence FSQDIRFFRT…LKEKGVWEGK (115 aa). His143 and Tyr147 together coordinate heme.

This sequence belongs to the CcmE/CycJ family.

Its subcellular location is the cell inner membrane. Functionally, heme chaperone required for the biogenesis of c-type cytochromes. Transiently binds heme delivered by CcmC and transfers the heme to apo-cytochromes in a process facilitated by CcmF and CcmH. This Brucella anthropi (strain ATCC 49188 / DSM 6882 / CCUG 24695 / JCM 21032 / LMG 3331 / NBRC 15819 / NCTC 12168 / Alc 37) (Ochrobactrum anthropi) protein is Cytochrome c-type biogenesis protein CcmE.